The following is a 210-amino-acid chain: Orotate phosphoribosyltransferase (210 aa).

Residues Arg-94, Lys-98, His-100, and 120-128 (EDLISTGGS) contribute to the 5-phospho-alpha-D-ribose 1-diphosphate site. Ser-124 is a binding site for orotate.

It belongs to the purine/pyrimidine phosphoribosyltransferase family. PyrE subfamily. Homodimer. Requires Mg(2+) as cofactor.

It carries out the reaction orotidine 5'-phosphate + diphosphate = orotate + 5-phospho-alpha-D-ribose 1-diphosphate. It participates in pyrimidine metabolism; UMP biosynthesis via de novo pathway; UMP from orotate: step 1/2. In terms of biological role, catalyzes the transfer of a ribosyl phosphate group from 5-phosphoribose 1-diphosphate to orotate, leading to the formation of orotidine monophosphate (OMP). The polypeptide is Orotate phosphoribosyltransferase (Bacillus mycoides (strain KBAB4) (Bacillus weihenstephanensis)).